The following is a 162-amino-acid chain: Transcriptional repressor NrdR (162 aa).

A zinc finger lies at 3–34 (CPFCQFEGLKVTDSRDAMEMNAIRRRRECLNC). The region spanning 48 to 138 (VQVQKRDGTY…VYKRFKDLGE (91 aa)) is the ATP-cone domain.

The protein belongs to the NrdR family. Zn(2+) serves as cofactor.

Its function is as follows. Negatively regulates transcription of bacterial ribonucleotide reductase nrd genes and operons by binding to NrdR-boxes. This Protochlamydia amoebophila (strain UWE25) protein is Transcriptional repressor NrdR.